The sequence spans 318 residues: NADH-ubiquinone oxidoreductase chain 1 (318 aa).

The next 8 membrane-spanning stretches (helical) occupy residues 3–23, 69–89, 102–122, 144–164, 171–191, 222–242, 253–273, and 294–314; these read LINL…LTLL, MLFI…WTPL, MLFI…SGWA, VTLA…TLLS, YIWL…STLA, LFFL…IILF, ELYT…FLWI, and LPLT…LAGI.

It belongs to the complex I subunit 1 family. Core subunit of respiratory chain NADH dehydrogenase (Complex I) which is composed of 45 different subunits.

The protein resides in the mitochondrion inner membrane. It carries out the reaction a ubiquinone + NADH + 5 H(+)(in) = a ubiquinol + NAD(+) + 4 H(+)(out). In terms of biological role, core subunit of the mitochondrial membrane respiratory chain NADH dehydrogenase (Complex I) which catalyzes electron transfer from NADH through the respiratory chain, using ubiquinone as an electron acceptor. Essential for the catalytic activity and assembly of complex I. The sequence is that of NADH-ubiquinone oxidoreductase chain 1 (MT-ND1) from Murina florium (Flores tube-nosed bat).